A 139-amino-acid polypeptide reads, in one-letter code: Protein archease (139 aa).

Ca(2+) is bound by residues D12, D138, and I139.

The protein belongs to the archease family.

Activates the tRNA-splicing ligase complex by facilitating the enzymatic turnover of catalytic subunit RtcB. Acts by promoting the guanylylation of RtcB, a key intermediate step in tRNA ligation. Can also alter the NTP specificity of RtcB such that ATP, dGTP or ITP is used efficiently. This chain is Protein archease, found in Sulfurisphaera tokodaii (strain DSM 16993 / JCM 10545 / NBRC 100140 / 7) (Sulfolobus tokodaii).